A 340-amino-acid chain; its full sequence is tRNA N6-adenosine threonylcarbamoyltransferase (340 aa).

Residues H113 and H117 each contribute to the Fe cation site. Substrate-binding positions include L135–G139, D169, G182, D186, and N274. D302 provides a ligand contact to Fe cation.

The protein belongs to the KAE1 / TsaD family. Fe(2+) is required as a cofactor.

The protein localises to the cytoplasm. The catalysed reaction is L-threonylcarbamoyladenylate + adenosine(37) in tRNA = N(6)-L-threonylcarbamoyladenosine(37) in tRNA + AMP + H(+). Functionally, required for the formation of a threonylcarbamoyl group on adenosine at position 37 (t(6)A37) in tRNAs that read codons beginning with adenine. Is involved in the transfer of the threonylcarbamoyl moiety of threonylcarbamoyl-AMP (TC-AMP) to the N6 group of A37, together with TsaE and TsaB. TsaD likely plays a direct catalytic role in this reaction. The sequence is that of tRNA N6-adenosine threonylcarbamoyltransferase from Mycolicibacterium smegmatis (strain ATCC 700084 / mc(2)155) (Mycobacterium smegmatis).